Consider the following 154-residue polypeptide: Superoxide dismutase [Cu-Zn] (154 aa).

Cu cation-binding residues include histidine 47, histidine 49, and histidine 64. A disulfide bond links cysteine 58 and cysteine 147. Zn(2+) is bound by residues histidine 64, histidine 72, histidine 81, and aspartate 84. Cu cation is bound at residue histidine 121. Positions 125–137 (DDLGRGGNEESKK) are enriched in basic and acidic residues. The tract at residues 125-147 (DDLGRGGNEESKKTGNAGPRPAC) is disordered. Substrate is bound at residue arginine 144.

It belongs to the Cu-Zn superoxide dismutase family. In terms of assembly, homodimer. Cu cation serves as cofactor. Zn(2+) is required as a cofactor.

The protein localises to the cytoplasm. It catalyses the reaction 2 superoxide + 2 H(+) = H2O2 + O2. Its function is as follows. Destroys radicals which are normally produced within the cells and which are toxic to biological systems. This chain is Superoxide dismutase [Cu-Zn], found in Aspergillus niger (strain ATCC MYA-4892 / CBS 513.88 / FGSC A1513).